The chain runs to 290 residues: Transposon Ty3-G Gag polyprotein (290 aa).

At Ser2 the chain carries N-acetylserine. The CCHC-type zinc finger occupies Arg265–Ala282.

The protein resides in the cytoplasm. Its function is as follows. Capsid protein (CA) is the structural component of the virus-like particle (VLP), forming the shell that encapsulates the retrotransposons dimeric RNA genome. Nucleocapsid protein p9 (NC) forms the nucleocore that coats the retro-elements dimeric RNA. Binds these RNAs through its zinc fingers. Promotes primer tRNA(i)-Met annealing to the multipartite primer-binding site (PBS), dimerization of Ty3 RNA and initiation of reverse transcription. This is Transposon Ty3-G Gag polyprotein (TY3A-G) from Saccharomyces cerevisiae (strain ATCC 204508 / S288c) (Baker's yeast).